The chain runs to 334 residues: IRTLDDGGFYMANRISFPTLQNLVSHYMMDADGLAQRLSRPCSRANIPITSGLSYKDEWEIDRTTIQLQRKLGQGNFGEVWAGVWNGTTAVAVKTLKPDTMEVKDFVQEAQVMKKIHHPNLLQLYAVCTIGEPIYIVTELMKYGSMLEYLKHGEGKNITLHQMVDMSAQIASGMTYLEAHSYIHRDLAARNILVGEGNVCKVADFGLARVIKEDIYNPREGTKFPIKWTAPEAALYNRFTIKSDVWSFGVLISEIVTHGRMPYPGMTNRQVLEAVDRGYRMPCPEGCPDPLYKIMLSCWKHEPDDRPTFESLKNLLEDYYVSAAEGSYREPAPR.

In terms of domain architecture, SH2 spans 1 to 42 (IRTLDDGGFYMANRISFPTLQNLVSHYMMDADGLAQRLSRPC). Residues 66-321 (IQLQRKLGQG…LKNLLEDYYV (256 aa)) enclose the Protein kinase domain. ATP-binding positions include 72–80 (LGQGNFGEV) and K94. The active-site Proton acceptor is D186.

This sequence belongs to the protein kinase superfamily. Tyr protein kinase family.

It localises to the cytoplasm. The catalysed reaction is L-tyrosyl-[protein] + ATP = O-phospho-L-tyrosyl-[protein] + ADP + H(+). The protein is Tyrosine-protein kinase SRK3 (SRK3) of Spongilla lacustris (Freshwater sponge).